Here is an 83-residue protein sequence, read N- to C-terminus: Small ribosomal subunit protein eS21 (83 aa).

This sequence belongs to the eukaryotic ribosomal protein eS21 family. In terms of assembly, component of the 40S small ribosomal subunit. Interacts with sta.

It is found in the cytoplasm. The protein resides in the cytosol. The protein localises to the rough endoplasmic reticulum. This Ceratitis capitata (Mediterranean fruit fly) protein is Small ribosomal subunit protein eS21 (RpS21).